A 216-amino-acid polypeptide reads, in one-letter code: U1 small nuclear ribonucleoprotein A (216 aa).

RRM domains are found at residues 7–86 (QTIY…YSKS) and 142–216 (QILF…FAKK). Residues 97–142 (TFKERPKKVKPPKPAPGTDEKKDKKKKPSSAENSNPNAQTEQPPNQ) form a disordered region. Over residues 126–142 (SAENSNPNAQTEQPPNQ) the composition is skewed to polar residues.

This sequence belongs to the RRM U1 A/B'' family. Belongs to the spliceosome where it is associated with snRNP U1. Interacts with the SMN complex.

It localises to the nucleus. Its function is as follows. Binds stem loop II of U1 snRNA. It is the first snRNP to interact with pre-mRNA. This interaction is required for the subsequent binding of U2 snRNP and the U4/U6/U5 tri-snRNP. Plays a role in regulating sex-lethal splicing. This Drosophila melanogaster (Fruit fly) protein is U1 small nuclear ribonucleoprotein A (snf).